The primary structure comprises 163 residues: Nucleotide-binding protein YajQ (163 aa).

The protein belongs to the YajQ family.

In terms of biological role, nucleotide-binding protein. The polypeptide is Nucleotide-binding protein YajQ (Shigella flexneri).